A 232-amino-acid polypeptide reads, in one-letter code: Aprataxin-like protein (232 aa).

Residues 38–160 enclose the HIT domain; the sequence is LKVYIESPES…MTLDHVSPSL (123 aa). 3 interaction with DNA regions span residues 63 to 67, 138 to 149, and 161 to 165; these read DMFPK, HAGPSMNNLHLH, and KNSAH. Catalysis depends on His147, which acts as the Nucleophile. Positions 200 and 203 each coordinate Zn(2+). An interaction with DNA region spans residues 209–212; the sequence is RHFT. Zn(2+) contacts are provided by His217 and Glu221.

Monomer.

The protein resides in the nucleus. The protein localises to the cytoplasm. The catalysed reaction is a 5'-end adenosine-5'-diphospho-5'-2'-deoxyribonucleoside-DNA + H2O = a 5'-end 5'-phospho-2'-deoxyribonucleoside-DNA + AMP + 2 H(+). It catalyses the reaction a 5'-end adenosine-5'-diphospho-5'-ribonucleoside-2'-deoxyribonucleotide-DNA + H2O = a 5'-end 5'-phospho-ribonucleoside-2'-deoxyribonucleotide-DNA + AMP + 2 H(+). It carries out the reaction a 3'-end 2'-deoxyribonucleotide-3'-diphospho-5'-guanosine-DNA + H2O = a 3'-end 2'-deoxyribonucleotide 3'-phosphate-DNA + GMP + 2 H(+). Functionally, DNA-binding protein involved in single-strand DNA break repair, double-strand DNA break repair and base excision repair. Resolves abortive DNA ligation intermediates formed either at base excision sites, or when DNA ligases attempt to repair non-ligatable breaks induced by reactive oxygen species. Catalyzes the release of adenylate groups covalently linked to 5'-phosphate termini, resulting in the production of 5'-phosphate termini that can be efficiently rejoined. Likewise, catalyzes the release of 3'-linked guanosine (DNAppG) and inosine (DNAppI) from DNA, but has higher specific activity with 5'-linked adenosine (AppDNA). This chain is Aprataxin-like protein (hnt3), found in Schizosaccharomyces pombe (strain 972 / ATCC 24843) (Fission yeast).